The following is a 71-amino-acid chain: UPF0435 protein RBAM_008100 (71 aa).

The protein belongs to the UPF0435 family.

The protein is UPF0435 protein RBAM_008100 of Bacillus velezensis (strain DSM 23117 / BGSC 10A6 / LMG 26770 / FZB42) (Bacillus amyloliquefaciens subsp. plantarum).